The sequence spans 246 residues: Small ribosomal subunit protein uS2 (246 aa).

The protein belongs to the universal ribosomal protein uS2 family.

The chain is Small ribosomal subunit protein uS2 from Burkholderia thailandensis (strain ATCC 700388 / DSM 13276 / CCUG 48851 / CIP 106301 / E264).